Here is a 153-residue protein sequence, read N- to C-terminus: Flagellar assembly factor FliW (153 aa).

It belongs to the FliW family. Interacts with translational regulator CsrA and flagellin(s).

Its subcellular location is the cytoplasm. In terms of biological role, acts as an anti-CsrA protein, binds CsrA and prevents it from repressing translation of its target genes, one of which is flagellin. Binds to flagellin and participates in the assembly of the flagellum. This chain is Flagellar assembly factor FliW, found in Heliobacterium modesticaldum (strain ATCC 51547 / Ice1).